Reading from the N-terminus, the 232-residue chain is DASH complex subunit DUO1 (232 aa).

Disordered regions lie at residues 1 to 44 and 133 to 232; these read MADE…GGMR and ERRR…RGAK. A coiled-coil region spans residues 128 to 171; sequence ELEAEERRRQEEVERRAAEAERRREEARRKAEEEERRRAAAAAA. Residues 133 to 165 are compositionally biased toward basic and acidic residues; it reads ERRRQEEVERRAAEAERRREEARRKAEEEERRR. 2 stretches are compositionally biased toward low complexity: residues 167 to 183 and 191 to 213; these read AAAA…VGRG and GSGL…TTSG.

The protein belongs to the DASH complex DUO1 family. In terms of assembly, component of the DASH complex consisting of ASK1, DAD1, DAD2, DAD3, DAD4, DAM1, DUO1, HSK3, SPC19 and SPC34, with a stoichiometry of one copy of each subunit per complex. Multiple DASH complexes oligomerize to form a ring that encircles spindle microtubules and organizes the rod-like NDC80 complexes of the outer kinetochore. DASH complex oligomerization strengthens microtubule attachments. On cytoplasmic microtubules, DASH complexes appear to form patches instead of rings.

The protein resides in the nucleus. It is found in the cytoplasm. The protein localises to the cytoskeleton. Its subcellular location is the spindle pole. It localises to the chromosome. The protein resides in the centromere. It is found in the kinetochore. Functionally, component of the DASH complex that connects microtubules with kinetochores and couples microtubule depolymerisation to chromosome movement; it is involved in retrieving kinetochores to the spindle poles before their re-orientation on the spindle in early mitosis and allows microtubule depolymerization to pull chromosomes apart and resist detachment during anaphase. Kinetochores, consisting of a centromere-associated inner segment and a microtubule-contacting outer segment, play a crucial role in chromosome segregation by mediating the physical connection between centromeric DNA and microtubules. Kinetochores also serve as an input point for the spindle assembly checkpoint, which delays anaphase until all chromosomes have bioriented on the mitotic spindle. The chain is DASH complex subunit DUO1 from Chaetomium thermophilum (strain DSM 1495 / CBS 144.50 / IMI 039719) (Thermochaetoides thermophila).